Consider the following 353-residue polypeptide: Rhodopsin (353 aa).

The Extracellular portion of the chain corresponds to 1-36 (MNGTEGDNFYVPFSNKTGLARSPYEYPQYYLAEPWK). N-linked (GlcNAc...) asparagine glycosylation is found at Asn-2 and Asn-15. A helical transmembrane segment spans residues 37–61 (YSALAAYMFFLILVGFPVNFLTLFV). The Cytoplasmic portion of the chain corresponds to 62 to 73 (TVQHKKLRTPLN). The helical transmembrane segment at 74 to 96 (YILLNLAMANLFMVLFGFTVTMY) threads the bilayer. Residues 97 to 110 (TSMNGYFVFGPTMC) lie on the Extracellular side of the membrane. Residues Cys-110 and Cys-187 are joined by a disulfide bond. Residues 111 to 133 (SIEGFFATLGGEVALWSLVVLAI) traverse the membrane as a helical segment. Residues 134 to 136 (ERY) carry the 'Ionic lock' involved in activated form stabilization motif. Over 134–152 (ERYIVICKPMGNFRFGNTH) the chain is Cytoplasmic. Residues 153–173 (AIMGVAFTWIMALACAAPPLV) traverse the membrane as a helical segment. The Extracellular segment spans residues 174-202 (GWSRYIPEGMQCSCGPDYYTLNPNFNNES). Residues 203-224 (YVVYMFVVHFLVPFVIIFFCYG) form a helical membrane-spanning segment. Residues 225 to 252 (RLLCTVKEAAAAQQESASTQKAEKEVTR) lie on the Cytoplasmic side of the membrane. A helical transmembrane segment spans residues 253–274 (MVVLMVIGFLVCWVPYASVAFY). Residues 275-286 (IFTHQGSDFGAT) are Extracellular-facing. Residues 287-308 (FMTLPAFFAKSSALYNPVIYIL) form a helical membrane-spanning segment. The residue at position 296 (Lys-296) is an N6-(retinylidene)lysine. At 309–353 (MNKQFRNCMITTLCCGKNPLGDDESGASTSKTEVSSVSTSPVSPA) the chain is on the cytoplasmic side. A disordered region spans residues 330–353 (DDESGASTSKTEVSSVSTSPVSPA). A compositionally biased stretch (low complexity) spans 336 to 353 (STSKTEVSSVSTSPVSPA).

It belongs to the G-protein coupled receptor 1 family. Opsin subfamily. Post-translationally, phosphorylated on some or all of the serine and threonine residues present in the C-terminal region. Contains one covalently linked retinal chromophore. As to expression, short photoreceptor cells.

The protein resides in the membrane. It is found in the cell projection. It localises to the cilium. The protein localises to the photoreceptor outer segment. In terms of biological role, photoreceptor required for image-forming vision at low light intensity. While most salt water fish species use retinal as chromophore, most freshwater fish use 3-dehydroretinal, or a mixture of retinal and 3-dehydroretinal. Light-induced isomerization of 11-cis to all-trans retinal triggers a conformational change that activates signaling via G-proteins. Subsequent receptor phosphorylation mediates displacement of the bound G-protein alpha subunit by arrestin and terminates signaling. The protein is Rhodopsin (RHO) of Lethenteron camtschaticum (Japanese lamprey).